The chain runs to 134 residues: Small ribosomal subunit protein uS11 (134 aa).

The protein belongs to the universal ribosomal protein uS11 family. As to quaternary structure, part of the 30S ribosomal subunit. Interacts with proteins S7 and S18. Binds to IF-3.

Functionally, located on the platform of the 30S subunit, it bridges several disparate RNA helices of the 16S rRNA. Forms part of the Shine-Dalgarno cleft in the 70S ribosome. In Frankia casuarinae (strain DSM 45818 / CECT 9043 / HFP020203 / CcI3), this protein is Small ribosomal subunit protein uS11.